The primary structure comprises 375 residues: Alanine racemase, catabolic (375 aa).

The active-site Proton acceptor; specific for D-alanine is Lys-38. Lys-38 carries the post-translational modification N6-(pyridoxal phosphate)lysine. Tyr-269 functions as the Proton acceptor; specific for L-alanine in the catalytic mechanism.

This sequence belongs to the alanine racemase family. Pyridoxal 5'-phosphate is required as a cofactor.

It catalyses the reaction L-alanine = D-alanine. It functions in the pathway amino-acid biosynthesis; D-alanine biosynthesis; D-alanine from L-alanine: step 1/1. This is Alanine racemase, catabolic (alr1) from Schizosaccharomyces pombe (strain 972 / ATCC 24843) (Fission yeast).